The sequence spans 226 residues: Reticulon-like protein B16 (226 aa).

Residues A41–K224 enclose the Reticulon domain. 3 helical membrane-spanning segments follow: residues L54 to F74, L75 to V95, and V149 to L169.

The protein localises to the endoplasmic reticulum membrane. The sequence is that of Reticulon-like protein B16 (RTNLB16) from Arabidopsis thaliana (Mouse-ear cress).